A 907-amino-acid polypeptide reads, in one-letter code: Leucine--tRNA ligase (907 aa).

A 'HIGH' region motif is present at residues 42–52; that stretch reads PYPSGKLHMGH. The 'KMSKS' region motif lies at 651-655; that stretch reads TMSKS. Lys654 contacts ATP.

The protein belongs to the class-I aminoacyl-tRNA synthetase family.

It is found in the cytoplasm. It carries out the reaction tRNA(Leu) + L-leucine + ATP = L-leucyl-tRNA(Leu) + AMP + diphosphate. The polypeptide is Leucine--tRNA ligase (Verminephrobacter eiseniae (strain EF01-2)).